Reading from the N-terminus, the 285-residue chain is Bifunctional protein FolD (285 aa).

NADP(+)-binding positions include 165–167 (GRS) and S190.

The protein belongs to the tetrahydrofolate dehydrogenase/cyclohydrolase family. In terms of assembly, homodimer.

It carries out the reaction (6R)-5,10-methylene-5,6,7,8-tetrahydrofolate + NADP(+) = (6R)-5,10-methenyltetrahydrofolate + NADPH. The catalysed reaction is (6R)-5,10-methenyltetrahydrofolate + H2O = (6R)-10-formyltetrahydrofolate + H(+). It functions in the pathway one-carbon metabolism; tetrahydrofolate interconversion. In terms of biological role, catalyzes the oxidation of 5,10-methylenetetrahydrofolate to 5,10-methenyltetrahydrofolate and then the hydrolysis of 5,10-methenyltetrahydrofolate to 10-formyltetrahydrofolate. This is Bifunctional protein FolD from Burkholderia thailandensis (strain ATCC 700388 / DSM 13276 / CCUG 48851 / CIP 106301 / E264).